The chain runs to 425 residues: MADDGGDEKKQVAKFELERETELRFEVEASQTVQMELLTGMAEVFGTELTRNKKFTFDAGAKVAVFTWHGCTVQLSGRTEVAYVSKDTPMLLYLNTHTALEQMRRQAEREDERGPRVMVVGPTDVGKSTVCRLLLNYAVRLGRRPTFVELDVGQGSVSIPGTMGALYIERPADVEEGFSLQAPLVYHFGSTTPGTNIKLYNKITSRLADVFNQRCEVNRRASVSGCVINTCGWVKGSGYQALVHAASAFEVDVVVVLDQERLYNELKRDLPHFVRTVLLPKSGGVVERSKDFRRECRDDRIREYFYGFRGCFYPHAFDVKFSDVKIYKVGAPTIPDSCLPLGMSQEDNQLKLVPVTPGRDMVHHLLSVSMADSPDDNISETSVAGFIVVTGVDLERQVFTVLSPAPRPLPKNFLLIMDIRFMDLK.

ATP contacts are provided by residues glutamate 22, lysine 62, and 124–129 (DVGKST).

It belongs to the Clp1 family. Clp1 subfamily. Component of the tRNA splicing endonuclease complex. Component of pre-mRNA cleavage complex II (CF-II).

Its subcellular location is the nucleus. It catalyses the reaction a 5'-end dephospho-2'-deoxyribonucleoside-DNA + ATP = a 5'-end 5'-phospho-2'-deoxyribonucleoside-DNA + ADP + H(+). The catalysed reaction is a 5'-end dephospho-ribonucleoside-RNA + ATP = a 5'-end 5'-phospho-ribonucleoside-RNA + ADP + H(+). Polynucleotide kinase that can phosphorylate the 5'-hydroxyl groups of double-stranded RNA (dsRNA), single-stranded RNA (ssRNA), double stranded DNA (dsDNA) and double-stranded DNA:RNA hybrids. dsRNA is phosphorylated more efficiently than dsDNA, and the RNA component of a DNA:RNA hybrid is phosphorylated more efficiently than the DNA component. Plays a role in both tRNA splicing and mRNA 3'-end formation. Component of the tRNA splicing endonuclease complex: phosphorylates the 5'-terminus of the tRNA 3'-exon during tRNA splicing; this phosphorylation event is a prerequisite for the subsequent ligation of the two exon halves and the production of a mature tRNA. Its role in tRNA splicing and maturation is required for cerebellar development. Component of the pre-mRNA cleavage complex II (CF-II), which seems to be required for mRNA 3'-end formation. Also phosphorylates the 5'-terminus of exogenously introduced short interfering RNAs (siRNAs), which is a necessary prerequisite for their incorporation into the RNA-induced silencing complex (RISC). However, endogenous siRNAs and microRNAs (miRNAs) that are produced by the cleavage of dsRNA precursors by dicer1 already contain a 5'-phosphate group, so this protein may be dispensible for normal RNA-mediated gene silencing. The polypeptide is Polyribonucleotide 5'-hydroxyl-kinase Clp1 (Gallus gallus (Chicken)).